Here is a 363-residue protein sequence, read N- to C-terminus: Neutral protease 2 homolog NFIA_102630 (363 aa).

The first 19 residues, 1–19 (MKVTVLASAILALINGALA), serve as a signal peptide directing secretion. Positions 20–172 (LPANAPTLDV…PQAIKLLDRR (153 aa)) are excised as a propeptide. Intrachain disulfides connect Cys178–Cys250 and Cys257–Cys275. His300 contacts Zn(2+). Glu301 is a catalytic residue. 2 residues coordinate Zn(2+): His304 and Asp315.

It belongs to the peptidase M35 family. Requires Zn(2+) as cofactor.

It is found in the secreted. It catalyses the reaction Preferential cleavage of bonds with hydrophobic residues in P1'. Also 3-Asn-|-Gln-4 and 8-Gly-|-Ser-9 bonds in insulin B chain.. Its function is as follows. Secreted metalloproteinase that allows assimilation of proteinaceous substrates. Shows high activities on basic nuclear substrates such as histone and protamine. This Neosartorya fischeri (strain ATCC 1020 / DSM 3700 / CBS 544.65 / FGSC A1164 / JCM 1740 / NRRL 181 / WB 181) (Aspergillus fischerianus) protein is Neutral protease 2 homolog NFIA_102630.